The primary structure comprises 1855 residues: Unconventional myosin-Va (1855 aa).

The residue at position 2 (alanine 2) is an N-acetylalanine. The 53-residue stretch at 8 to 60 folds into the Myosin N-terminal SH3-like domain; sequence TKFARVWIPDPEEVWKSAELLKDYKPGDKVLLLHLEEGKDLEYHLDPKTKELP. The 695-residue stretch at 69–763 folds into the Myosin motor domain; that stretch reads VGENDLTALS…QVAYLEKLRA (695 aa). 163-170 is a binding site for ATP; the sequence is GESGAGKT. The disordered stretch occupies residues 598 to 631; it reads AISPTSATSSGRTPLTRTPAKPTKGRPGQMAKEH. Serine 600 is subject to Phosphoserine. A compositionally biased stretch (polar residues) spans 600–613; that stretch reads SPTSATSSGRTPLT. Residues 643 to 665 form an actin-binding region; that stretch reads LHLLMETLNATTPHYVRCIKPND. IQ domains lie at 766-788, 789-818, 814-836, 837-861, 862-883, and 885-914; these read LRAACIRIQKTIRGWLLRKKYLR, MRKAAITMQRYVRGYQARCYAKFLRRTKAA, RTKAATIIQKYWRMYVVRRRYKI, RRAATIVLQSYLRGFLARNRYRKIL, REHKAVIIQKRVRGWLARTHYK, and SMHAIIYLQCCFRRMMAKRELKKLKIEARS. Coiled-coil stretches lie at residues 914–1237 and 1338–1445; these read SVER…APEV and VYEG…ELEV. The residue at position 1032 (threonine 1032) is a Phosphothreonine. 2 positions are modified to phosphoserine: serine 1452 and serine 1652. The Dilute domain maps to 1534-1810; sequence TSTINSIKKV…IRTIQMRLRD (277 aa). Threonine 1760 is modified (phosphothreonine).

This sequence belongs to the TRAFAC class myosin-kinesin ATPase superfamily. Myosin family. In terms of assembly, may be a homodimer, which associates with multiple calmodulin or myosin light chains. Interacts with RIPL2, the interaction is required for its role in dendrite formation. Interacts with MLPH. Interacts with SYTL4. Interacts with MYRIP. Interacts with RAB10; mediates the transport to the plasma membrane of SLC2A4/GLUT4 storage vesicles. Interacts with FMR1; this interaction occurs in association with polyribosome. As to expression, detected in melanocytes.

The enzyme catalyses ATP + H2O = ADP + phosphate + H(+). Processive actin-based motor that can move in large steps approximating the 36-nm pseudo-repeat of the actin filament. Can hydrolyze ATP in the presence of actin, which is essential for its function as a motor protein. Involved in melanosome transport. Also mediates the transport of vesicles to the plasma membrane. May also be required for some polarization process involved in dendrite formation. In Homo sapiens (Human), this protein is Unconventional myosin-Va (MYO5A).